Reading from the N-terminus, the 482-residue chain is Protein trichome birefringence-like 15 (482 aa).

Residues Gly109–Ala129 traverse the membrane as a helical; Signal-anchor for type II membrane protein segment. The GDS motif motif lies at Gly217 to Ser219. The short motif at Asp461 to Asn475 is the DCXHWCLPGXXDXWN motif element.

Belongs to the PC-esterase family. TBL subfamily.

It is found in the membrane. In terms of biological role, may act as a bridging protein that binds pectin and other cell wall polysaccharides. Probably involved in maintaining esterification of pectins. May be involved in the specific O-acetylation of cell wall polymers. In Arabidopsis thaliana (Mouse-ear cress), this protein is Protein trichome birefringence-like 15 (TBL15).